The sequence spans 303 residues: MYSKYPAFFLNKNIKSSSGVQFSNVVKIPSAIESLYRGDNNLTGIIFLLPTLITGVFCQNFPEVVDIEQIRLHKLTNLSNDFHMVSMSEDPQIALDWGNGCFITIDPVSFSDYIVDVHATFSENQLNLPGRMEREKEHVALAVPFCSIKKITIHNKELANPFYLSIPQENHEAKMELNTLYGELISLLRKKYTQEVDEKEEQIALRTYAIRYLDFYAKFCGCDNPFDKTIAQLSELYPEFMSNFLQSSHFSSKTGLMKEIVVNSLDNLFKEHPYTKSIDASYIYRVKESTTCYEDDWAKPVYD.

The protein resides in the secreted. The catalysed reaction is L-arginyl-[protein] + NAD(+) = N(omega)-(ADP-D-ribosyl)-L-arginyl-[protein] + nicotinamide + H(+). ADP-ribosyltransferase that targets a specific class of NAD(+)-dependent glutamate dehydrogenase (GDH) enzymes found in fungi and protists, including many natural hosts of Legionella. Acts by targeting a conserved arginine residue in the NAD(+)-binding pocket of GDH, thereby blocking oxidative deamination of glutamate. Lart1 may target amoeba GDH to prevent a conserved stress response. In vitro, acts on Glud2 from the amoeba Dictyostelium discoideum (DdGluD2) and yeast Gdh2p but does not act on human or Legionella GDH homologs. The chain is NAD(+)--arginine ADP-ribosyltransferase Lart1 from Legionella pneumophila subsp. pneumophila (strain Philadelphia 1 / ATCC 33152 / DSM 7513).